Consider the following 197-residue polypeptide: ATP-dependent Clp protease proteolytic subunit (197 aa).

The active-site Nucleophile is serine 98. Histidine 123 is an active-site residue.

Belongs to the peptidase S14 family. In terms of assembly, fourteen ClpP subunits assemble into 2 heptameric rings which stack back to back to give a disk-like structure with a central cavity, resembling the structure of eukaryotic proteasomes.

It is found in the cytoplasm. It catalyses the reaction Hydrolysis of proteins to small peptides in the presence of ATP and magnesium. alpha-casein is the usual test substrate. In the absence of ATP, only oligopeptides shorter than five residues are hydrolyzed (such as succinyl-Leu-Tyr-|-NHMec, and Leu-Tyr-Leu-|-Tyr-Trp, in which cleavage of the -Tyr-|-Leu- and -Tyr-|-Trp bonds also occurs).. Functionally, cleaves peptides in various proteins in a process that requires ATP hydrolysis. Has a chymotrypsin-like activity. Plays a major role in the degradation of misfolded proteins. The polypeptide is ATP-dependent Clp protease proteolytic subunit (Anaplasma phagocytophilum (strain HZ)).